A 108-amino-acid chain; its full sequence is Ig kappa chain V-V region HP R16.7 (108 aa).

A framework-1 region spans residues 1-23; sequence DIQMTQTTSSLSASLGDRVTISC. A disulfide bridge connects residues cysteine 23 and cysteine 88. The interval 24-34 is complementarity-determining-1; that stretch reads RASQDISNYLN. Positions 35 to 49 are framework-2; sequence WYQQKPDGTVKLLIY. The segment at 50–56 is complementarity-determining-2; that stretch reads YTSRLHS. The tract at residues 57-88 is framework-3; it reads GVPSRFSGSGSGTDYSLTISNLEQEDIATYFC. Residues 89-97 form a complementarity-determining-3 region; sequence QQGNSLPRT. A framework-4 region spans residues 98-108; it reads FGGGTKLEIKR.

This is Ig kappa chain V-V region HP R16.7 from Mus musculus (Mouse).